The sequence spans 261 residues: MTHQTHAYHMVNPSPWPLTGALSALLMTSGLIMWFHFNSTALLMLGLTTNMLTMYQWWRDIIRESTFQGHHTPVVQKGLRYGMILFIISEVLFFTGFFWAFYHSSLAPTPELGGCWPPTGINPLNPLEVPLLNTSVLLASGVSITWAHHSLMEGNRSHMLQALFITITLGVYFTLLQASEYYEAPFTISDGVYGSTFFVATGFHGLHVIIGSTFLIVCFFRQLKFHFTSNHHFGFEAAAWYWHFVDVVWLFLYVSIYWWGS.

Over 1–15 the chain is Mitochondrial matrix; the sequence is MTHQTHAYHMVNPSP. Residues 16–34 form a helical membrane-spanning segment; that stretch reads WPLTGALSALLMTSGLIMW. The Mitochondrial intermembrane portion of the chain corresponds to 35–40; the sequence is FHFNST. The chain crosses the membrane as a helical span at residues 41–66; it reads ALLMLGLTTNMLTMYQWWRDIIREST. Topologically, residues 67–72 are mitochondrial matrix; the sequence is FQGHHT. Residues 73–105 traverse the membrane as a helical segment; that stretch reads PVVQKGLRYGMILFIISEVLFFTGFFWAFYHSS. Topologically, residues 106 to 128 are mitochondrial intermembrane; that stretch reads LAPTPELGGCWPPTGINPLNPLE. Residues 129 to 152 traverse the membrane as a helical segment; sequence VPLLNTSVLLASGVSITWAHHSLM. At 153-155 the chain is on the mitochondrial matrix side; sequence EGN. The helical transmembrane segment at 156-183 threads the bilayer; sequence RSHMLQALFITITLGVYFTLLQASEYYE. Residues 184 to 190 lie on the Mitochondrial intermembrane side of the membrane; that stretch reads APFTISD. A helical membrane pass occupies residues 191 to 223; it reads GVYGSTFFVATGFHGLHVIIGSTFLIVCFFRQL. The Mitochondrial matrix segment spans residues 224-232; that stretch reads KFHFTSNHH. Residues 233-256 traverse the membrane as a helical segment; that stretch reads FGFEAAAWYWHFVDVVWLFLYVSI. At 257–261 the chain is on the mitochondrial intermembrane side; sequence YWWGS.

It belongs to the cytochrome c oxidase subunit 3 family. Component of the cytochrome c oxidase (complex IV, CIV), a multisubunit enzyme composed of 14 subunits. The complex is composed of a catalytic core of 3 subunits MT-CO1, MT-CO2 and MT-CO3, encoded in the mitochondrial DNA, and 11 supernumerary subunits COX4I, COX5A, COX5B, COX6A, COX6B, COX6C, COX7A, COX7B, COX7C, COX8 and NDUFA4, which are encoded in the nuclear genome. The complex exists as a monomer or a dimer and forms supercomplexes (SCs) in the inner mitochondrial membrane with NADH-ubiquinone oxidoreductase (complex I, CI) and ubiquinol-cytochrome c oxidoreductase (cytochrome b-c1 complex, complex III, CIII), resulting in different assemblies (supercomplex SCI(1)III(2)IV(1) and megacomplex MCI(2)III(2)IV(2)).

It localises to the mitochondrion inner membrane. The catalysed reaction is 4 Fe(II)-[cytochrome c] + O2 + 8 H(+)(in) = 4 Fe(III)-[cytochrome c] + 2 H2O + 4 H(+)(out). Its function is as follows. Component of the cytochrome c oxidase, the last enzyme in the mitochondrial electron transport chain which drives oxidative phosphorylation. The respiratory chain contains 3 multisubunit complexes succinate dehydrogenase (complex II, CII), ubiquinol-cytochrome c oxidoreductase (cytochrome b-c1 complex, complex III, CIII) and cytochrome c oxidase (complex IV, CIV), that cooperate to transfer electrons derived from NADH and succinate to molecular oxygen, creating an electrochemical gradient over the inner membrane that drives transmembrane transport and the ATP synthase. Cytochrome c oxidase is the component of the respiratory chain that catalyzes the reduction of oxygen to water. Electrons originating from reduced cytochrome c in the intermembrane space (IMS) are transferred via the dinuclear copper A center (CU(A)) of subunit 2 and heme A of subunit 1 to the active site in subunit 1, a binuclear center (BNC) formed by heme A3 and copper B (CU(B)). The BNC reduces molecular oxygen to 2 water molecules using 4 electrons from cytochrome c in the IMS and 4 protons from the mitochondrial matrix. This is Cytochrome c oxidase subunit 3 (MT-CO3) from Syncerus caffer (African buffalo).